The following is a 164-amino-acid chain: C-phycoerythrin alpha chain (164 aa).

(2R,3E)-phycoerythrobilin is bound by residues Cys82 and Cys139.

This sequence belongs to the phycobiliprotein family. In terms of assembly, heterodimer of an alpha and a beta chain. Contains two covalently linked bilin chromophores.

The protein resides in the cellular thylakoid membrane. Its function is as follows. Light-harvesting photosynthetic bile pigment-protein from the phycobiliprotein complex. The sequence is that of C-phycoerythrin alpha chain (cpeA) from Synechocystis sp. (strain PCC 6701).